Consider the following 238-residue polypeptide: 5-amino-6-(5-phospho-D-ribitylamino)uracil phosphatase YigB (238 aa).

Catalysis depends on D16, which acts as the Nucleophile. The Mg(2+) site is built by D16, D18, and D188. 16–18 (DLD) serves as a coordination point for substrate.

It belongs to the HAD-like hydrolase superfamily. Mg(2+) is required as a cofactor. The cofactor is Mn(2+). It depends on Co(2+) as a cofactor. Requires Zn(2+) as cofactor.

The enzyme catalyses 5-amino-6-(5-phospho-D-ribitylamino)uracil + H2O = 5-amino-6-(D-ribitylamino)uracil + phosphate. Its pathway is cofactor biosynthesis; riboflavin biosynthesis; 5-amino-6-(D-ribitylamino)uracil from GTP: step 4/4. In terms of biological role, catalyzes the dephosphorylation of 5-amino-6-(5-phospho-D-ribitylamino)uracil, and thus could be involved in the riboflavin biosynthesis pathway. Is also able to dephosphorylate flavin mononucleotide (FMN) and other phosphoric acid esters. YigB is important for the formation of dormant persister cells. The sequence is that of 5-amino-6-(5-phospho-D-ribitylamino)uracil phosphatase YigB (yigB) from Escherichia coli (strain K12).